The sequence spans 780 residues: Vacuolar protein sorting-associated protein 51 homolog (780 aa).

An N-acetylalanine modification is found at alanine 2. Disordered regions lie at residues 270–292 and 615–651; these read STLV…PAKI and QGTF…SNSQ. Over residues 273–284 the composition is skewed to acidic residues; sequence VEDDDSSNDTES. Positions 626–639 are enriched in low complexity; the sequence is SNGSNTTTSSRSNT.

This sequence belongs to the VPS51 family. Component of the Golgi-associated retrograde protein (GARP) complex, composed by VPS51, VPS52, VPS53 and VPS54. Component of the endosome-associated retrograde protein (EARP) complex, composed of VPS51, VPS52, VPS53 and VPS50. Interacts with VPS52. As to expression, expressed in primary and lateral roots, shoots of seedlings and flowers.

Its subcellular location is the golgi apparatus. It localises to the trans-Golgi network. The protein localises to the recycling endosome. It is found in the prevacuolar compartment. Functionally, acts as a component of the GARP complex that is involved in retrograde transport from early and late endosomes to the trans-Golgi network (TGN). The GARP complex is required for the maintenance of protein retrieval from endosomes to the TGN, acid hydrolase sorting, lysosome function, endosomal cholesterol traffic and autophagy. VPS51 participates in retrograde transport of acid hydrolase receptors, likely by promoting tethering and SNARE-dependent fusion of endosome-derived carriers to the TGN. Acts as a component of the EARP complex that is involved in endocytic recycling. The EARP complex associates with Rab4-positive endosomes and promotes recycling of internalized transferrin receptor (TFRC) to the plasma membrane. Required for vacuolar targeting and cellular trafficking. Involved in the regulation of vascular tissue patterning, probably by regulating PIN1 expression pattern, thus modulating auxin flux. Important to prevent PIN1 accumulation within margin cells, possibly by targeting PIN1 to the lytic vacuole. Regulates PIN1 and ATHB8 expression pattern in secondary veins. This is Vacuolar protein sorting-associated protein 51 homolog from Arabidopsis thaliana (Mouse-ear cress).